The sequence spans 296 residues: 6-hydroxypseudooxynicotine dehydrogenase complex subunit alpha (296 aa).

Residues 1-177 (MKPPSFDYVV…VEVNVPQLPH (177 aa)) form the FAD-binding PCMH-type domain. FAD contacts are provided by residues 30 to 37 (IIAGGQSL), 111 to 115 (TIGGS), and Glu-124.

Heterohexamer of 2 alpha (kdhA), 2 beta (kdhB) and 2 gamma (kdhC) subunit. Dimer of heterotrimers. Requires FAD as cofactor.

The enzyme catalyses 6-hydroxypseudooxynicotine + A + H2O = 2,6-dihydroxypseudooxynicotine + AH2. Its pathway is alkaloid degradation; nicotine degradation. Functionally, molybdo-flavoprotein enzyme complex involved in nicotine degradation. The subunit gamma (large subunit) contains the substrate-binding sites, the subunit alpha (medium subunit) binds FAD and the subunit beta (small subunit) has a 2Fe-2S ferredoxin-type domain which binds 2 2Fe-2S clusters. This Paenarthrobacter nicotinovorans (Arthrobacter nicotinovorans) protein is 6-hydroxypseudooxynicotine dehydrogenase complex subunit alpha (kdhA).